Here is a 590-residue protein sequence, read N- to C-terminus: Aspartate--tRNA(Asp/Asn) ligase (590 aa).

Glutamate 175 is an L-aspartate binding site. The aspartate stretch occupies residues 199–202; it reads QQYK. Residues arginine 221 and histidine 450 each contribute to the L-aspartate site. 221-223 is an ATP binding site; it reads RDE. Glutamate 484 contacts ATP. L-aspartate is bound at residue arginine 491. Residue 536–539 coordinates ATP; that stretch reads GVDR.

Belongs to the class-II aminoacyl-tRNA synthetase family. Type 1 subfamily. In terms of assembly, homodimer.

It localises to the cytoplasm. The catalysed reaction is tRNA(Asx) + L-aspartate + ATP = L-aspartyl-tRNA(Asx) + AMP + diphosphate. Its function is as follows. Aspartyl-tRNA synthetase with relaxed tRNA specificity since it is able to aspartylate not only its cognate tRNA(Asp) but also tRNA(Asn). Reaction proceeds in two steps: L-aspartate is first activated by ATP to form Asp-AMP and then transferred to the acceptor end of tRNA(Asp/Asn). The sequence is that of Aspartate--tRNA(Asp/Asn) ligase from Rhodopseudomonas palustris (strain BisB18).